Reading from the N-terminus, the 127-residue chain is Thioredoxin (127 aa).

Positions 2–115 (SDGVKHINSA…LRAAAEKMGR (114 aa)) constitute a Thioredoxin domain. Active-site nucleophile residues include Cys33 and Cys36. Cysteines 33 and 36 form a disulfide.

This sequence belongs to the thioredoxin family.

Participates in various redox reactions through the reversible oxidation of its active center dithiol to a disulfide and catalyzes dithiol-disulfide exchange reactions. The polypeptide is Thioredoxin (trx) (Neurospora crassa (strain ATCC 24698 / 74-OR23-1A / CBS 708.71 / DSM 1257 / FGSC 987)).